We begin with the raw amino-acid sequence, 195 residues long: 3-isopropylmalate dehydratase small subunit (195 aa).

It belongs to the LeuD family. LeuD type 1 subfamily. As to quaternary structure, heterodimer of LeuC and LeuD.

It carries out the reaction (2R,3S)-3-isopropylmalate = (2S)-2-isopropylmalate. Its pathway is amino-acid biosynthesis; L-leucine biosynthesis; L-leucine from 3-methyl-2-oxobutanoate: step 2/4. Its function is as follows. Catalyzes the isomerization between 2-isopropylmalate and 3-isopropylmalate, via the formation of 2-isopropylmaleate. This chain is 3-isopropylmalate dehydratase small subunit, found in Koribacter versatilis (strain Ellin345).